A 461-amino-acid chain; its full sequence is Cysteine--tRNA ligase (461 aa).

A Zn(2+)-binding site is contributed by Cys28. A 'HIGH' region motif is present at residues 30–40 (VTIYDLCHIGH). Positions 209, 234, and 238 each coordinate Zn(2+). The 'KMSKS' region motif lies at 266 to 270 (KMSKS). Lys269 contacts ATP.

It belongs to the class-I aminoacyl-tRNA synthetase family. In terms of assembly, monomer. Zn(2+) is required as a cofactor.

It localises to the cytoplasm. It carries out the reaction tRNA(Cys) + L-cysteine + ATP = L-cysteinyl-tRNA(Cys) + AMP + diphosphate. This chain is Cysteine--tRNA ligase, found in Serratia proteamaculans (strain 568).